A 102-amino-acid polypeptide reads, in one-letter code: Small ribosomal subunit protein uS10 (102 aa).

The protein belongs to the universal ribosomal protein uS10 family. As to quaternary structure, part of the 30S ribosomal subunit.

In terms of biological role, involved in the binding of tRNA to the ribosomes. This chain is Small ribosomal subunit protein uS10, found in Streptococcus thermophilus (strain ATCC BAA-491 / LMD-9).